The primary structure comprises 227 residues: MESFEKLEKLLSYSFKNKELLIEALSHPSLRQHHEYKDDKDYERLEFLGDAVLNLVITEILFRNFANYNEGNLAKIRSYLVCKETICMVGAKLTLKNYIIMTHGEEVAGGRDNLNNIENATEALIAAIYLDSNIETTHDIIENLWAEFIKVQNLTDYDPKTALQEWAQASDHHLPIYRLIKREGASHSSTFTVLVKVKDYEQTGTGHTIKEAEKNAARSLLHRLKND.

The RNase III domain maps to 4-133 (FEKLEKLLSY…LIAAIYLDSN (130 aa)). Mg(2+) is bound at residue Glu46. Asp50 is a catalytic residue. Mg(2+) contacts are provided by Asn119 and Glu122. Residue Glu122 is part of the active site. Residues 158–226 (DPKTALQEWA…ARSLLHRLKN (69 aa)) enclose the DRBM domain.

It belongs to the ribonuclease III family. In terms of assembly, homodimer. Mg(2+) serves as cofactor.

The protein localises to the cytoplasm. The enzyme catalyses Endonucleolytic cleavage to 5'-phosphomonoester.. Digests double-stranded RNA. Involved in the processing of primary rRNA transcript to yield the immediate precursors to the large and small rRNAs (23S and 16S). Processes some mRNAs, and tRNAs when they are encoded in the rRNA operon. Processes pre-crRNA and tracrRNA of type II CRISPR loci if present in the organism. This is Ribonuclease 3 from Rickettsia conorii (strain ATCC VR-613 / Malish 7).